The chain runs to 870 residues: MAGCRGSVCCCCRWCCCCGERESRTPEELTILGETQEEEDEILPRKDYESLDYDRCINDPYLEVLETMDNKKGRRYEAVKWMVVFAIGVCTGLVGLFVDFSVRLFTQLKFGVVQTSVEECSQKGCLALSLLELLGFNLTFVFLASLLVLIEPVAAGSGIPEIKCYLNGVKVPGIVRLRTLLCKVFGVLFSVSGGLFVGKEGPMIHSGAVVGAGLPQFQSISLRKIQFNFPYFRSDRDKRDFVSAGAAAGVAAAFGAPIGGTLFSLEEGSSFWNQGLTWKVLFCSMSATFTLNFFRSGIQFGSWGSFQLPGLLNFGEFKCSDSDKKCHLWTAMDLGFFVVMGVIGGLLGATFNCLNKRLAKYRMRNVHPKPKLVRVLESLLVSLVTTVVVFVASMVLGECRQMSSTSQTGNGSFQLQVTSEDVNSTIKAFFCPNDTYNDMATLFFNSQESAILQLFHQDGTFSPVTLALFFILYFLLACWTFGTSVPSGLFVPSLLCGAAFGRLVANVLKSYIGLGHLYSGTFALIGAAAFLGGVVRMTISLTVILIESTNEITYGLPIMVTLMVAKWTGDLFNKGIYDVHIGLRGVPLLEWETDVEMDKLRASDIMEPNLTYVYPHTRIQSLVSILRTTVHHAFPVVTENRGNEKEFMKGNQLISNNIKFKKSSILTRAGEQRKRGQSMKSYPSSELRNVCDEHVASEEPAEKEDLLQQMLERRYTPYPNLYPDQSPSEDWTMEERFRPLTFHGLVLRSQLVTLLVRGVCYSESQSSASQPRLSYAEMAEDYPRYPDIHDLDLTLLNPRMIVDVTPYMNPSPFTVSPNTHVSQVFNLFRTMGLRHLPVVNAVGEIVGIITRHNLTNEFLQARLRQHYQTL.

Residues 1–80 (MAGCRGSVCC…KKGRRYEAVK (80 aa)) are Cytoplasmic-facing. Helical transmembrane passes span 81-113 (WMVV…FGVV) and 128-150 (LSLL…LVLI). The Selectivity filter part_1 motif lies at 156–160 (GSGIP). Serine 157 is a chloride binding site. The helical intramembrane region spans 159-166 (IPEIKCYL). A run of 2 helical transmembrane segments spans residues 176-194 (RLRT…VSGG) and 200-217 (EGPM…LPQF). A Selectivity filter part_2 motif is present at residues 198 to 202 (GKEGP). 2 consecutive intramembrane regions (helical) follow at residues 241–253 (FVSA…VAAA) and 257–265 (PIGGTLFSL). 3 helical membrane-spanning segments follow: residues 277–294 (TWKV…LNFF), 335–364 (GFFV…YRMR), and 371–392 (KLVR…VFVA). N-linked (GlcNAc...) asparagine glycans are attached at residues asparagine 410, asparagine 423, and asparagine 433. Transmembrane regions (helical) follow at residues 463 to 482 (PVTL…WTFG) and 488 to 512 (GLFV…KSYI). Residues 488 to 492 (GLFVP) carry the Selectivity filter part_3 motif. Phenylalanine 490 is a binding site for chloride. Positions 520-534 (GTFALIGAAAFLGGV) form an intramembrane region, helical. An intramembrane region (note=Loop between two helices) is located at residues 535-537 (VRM). Positions 538–549 (TISLTVILIEST) form an intramembrane region, helical. The segment at residues 550 to 553 (NEIT) is an intramembrane region (note=Loop between two helices). Residues 554-572 (YGLPIMVTLMVAKWTGDLF) traverse the membrane as a helical segment. The Cytoplasmic segment spans residues 573-870 (NKGIYDVHIG…ARLRQHYQTL (298 aa)). Tyrosine 577 provides a ligand contact to chloride. Residues 606 to 663 (MEPNLTYVYPHTRIQSLVSILRTTVHHAFPVVTENRGNEKEFMKGNQLISNNIKFKKS) form the CBS 1 domain. Residue 631–633 (HHA) participates in ATP binding. Serine 774 is modified (phosphoserine). The CBS 2 domain occupies 808–869 (MNPSPFTVSP…QARLRQHYQT (62 aa)). ATP is bound at residue 850–853 (TRHN).

It belongs to the chloride channel (TC 2.A.49) family. ClC-6/CLCN6 subfamily. Post-translationally, N-glycosylated on several asparagine residues. As to expression, detected in whole brain and in hippocampus neurons (at protein level). Detected in brain, trigeminus, dorsal root ganglion, spinal cord, eye, kidney, testis, skeletal muscle, thymus and pancreas. Isoform ClC-6c is expressed only in kidney.

The protein localises to the late endosome membrane. It carries out the reaction 2 chloride(in) + H(+)(out) = 2 chloride(out) + H(+)(in). In terms of biological role, voltage-gated channel mediating the exchange of chloride ions against protons. Functions as antiporter and contributes to the acidification of the late endosome lumen. The CLC channel family contains both chloride channels and proton-coupled anion transporters that exchange chloride or another anion for protons. The presence of conserved gating glutamate residues is typical for family members that function as antiporters. This chain is H(+)/Cl(-) exchange transporter 6, found in Mus musculus (Mouse).